Consider the following 289-residue polypeptide: DegV domain-containing protein YteA (289 aa).

The 282-residue stretch at 3–284 (FQIMTDSTAD…DGTIAIFSIS (282 aa)) folds into the DegV domain. Residues Thr-62 and Ser-94 each coordinate hexadecanoate.

Its function is as follows. May bind long-chain fatty acids, such as palmitate, and may play a role in lipid transport or fatty acid metabolism. The chain is DegV domain-containing protein YteA (yteA) from Lactococcus lactis subsp. lactis (strain IL1403) (Streptococcus lactis).